An 808-amino-acid polypeptide reads, in one-letter code: Probable inorganic carbon transporter subunit DabA (808 aa).

4 residues coordinate Zn(2+): Cys-335, Asp-337, His-497, and Cys-512.

Belongs to the inorganic carbon transporter (TC 9.A.2) DabA family. Forms a complex with DabB. Requires Zn(2+) as cofactor.

Its subcellular location is the cell inner membrane. Functionally, part of an energy-coupled inorganic carbon pump. The sequence is that of Probable inorganic carbon transporter subunit DabA from Rhodopseudomonas palustris (strain TIE-1).